A 195-amino-acid chain; its full sequence is Imidazoleglycerol-phosphate dehydratase (195 aa).

This sequence belongs to the imidazoleglycerol-phosphate dehydratase family.

The protein resides in the cytoplasm. It carries out the reaction D-erythro-1-(imidazol-4-yl)glycerol 3-phosphate = 3-(imidazol-4-yl)-2-oxopropyl phosphate + H2O. It participates in amino-acid biosynthesis; L-histidine biosynthesis; L-histidine from 5-phospho-alpha-D-ribose 1-diphosphate: step 6/9. The chain is Imidazoleglycerol-phosphate dehydratase from Maridesulfovibrio salexigens (strain ATCC 14822 / DSM 2638 / NCIMB 8403 / VKM B-1763) (Desulfovibrio salexigens).